Reading from the N-terminus, the 198-residue chain is Bcl-2-like protein 11 (198 aa).

Residues 1–72 (MAKQPSDVSS…PLAPPASPGP (72 aa)) are disordered. At Ser-69 the chain carries Phosphoserine; by MAPK. Phosphoserine is present on residues Ser-77, Ser-87, and Ser-94. Residues 148–162 (IAQELRRIGDEFNAY) carry the BH3 motif.

It belongs to the Bcl-2 family. Forms heterodimers with a number of antiapoptotic Bcl-2 proteins, including MCL1, BCL2, BCL2L1 isoform Bcl-X(L), BCL2A1/BFL-1, BHRF1, and BCL2L2/BCLW. Does not heterodimerize with proapoptotic proteins such as BAD, BOK or BAK. Identified in a complex containing BCL2L11, DYNLL1 and BCL2L1 isoform Bcl-X(L); BH3 integrity is required for BCL2L1-binding. Interacts with YWHAZ. When phosphorylated, interacts with TRIM2; this interaction is associated with ubiquitination and degradation. Interacts with MCL1; may sequester BCL2L11 to prevent its pro-apoptotic activity. Interacts with GIMAP5. Interacts with BCL2L10/BCL-B. As to quaternary structure, interacts (when phosphorylated) with USP27X; the interaction leads to BCL2L11 deubiquitination and stabilization. Interacts with humanin; the interaction prevents BIM-induced apoptosis. In terms of assembly, does not interact with humanin. Interacts with BAX; the interaction may lead to BAX activation through conformational change. Does not interact with humanin. As to quaternary structure, interacts with BAX; the interaction may lead to BAX activation through conformational change. In terms of processing, phosphorylation at Ser-69 by MAPK1/MAPK3 leads to interaction with TRIM2 and polyubiquitination, followed by proteasomal degradation. Deubiquitination catalyzed by USP27X stabilizes the protein. Post-translationally, ubiquitination by TRIM2 following phosphorylation by MAPK1/MAPK3 leads to proteasomal degradation. Conversely, deubiquitination catalyzed by USP27X stabilizes the protein. As to expression, isoform BimEL, isoform BimL and isoform BimS are the predominant isoforms and are widely expressed with tissue-specific variation. Isoform Bim-gamma is most abundantly expressed in small intestine and colon, and in lower levels in spleen, prostate, testis, heart, liver and kidney.

Its subcellular location is the endomembrane system. It localises to the mitochondrion. In terms of biological role, induces apoptosis and anoikis. Isoform BimL is more potent than isoform BimEL. Isoform Bim-alpha1, isoform Bim-alpha2 and isoform Bim-alpha3 induce apoptosis, although less potent than isoform BimEL, isoform BimL and isoform BimS. Isoform Bim-gamma induces apoptosis. Isoform Bim-alpha3 induces apoptosis possibly through a caspase-mediated pathway. Isoform BimAC and isoform BimABC lack the ability to induce apoptosis. The protein is Bcl-2-like protein 11 (BCL2L11) of Homo sapiens (Human).